The following is a 110-amino-acid chain: Iron-sulfur cluster assembly protein CyaY (110 aa).

Belongs to the frataxin family.

Involved in iron-sulfur (Fe-S) cluster assembly. May act as a regulator of Fe-S biogenesis. This Pseudomonas putida (strain W619) protein is Iron-sulfur cluster assembly protein CyaY.